Reading from the N-terminus, the 151-residue chain is MSLGGGGGGGAMEQIQQQLQALEQEKQAIQAEIENVRDEQSEIDEAIEAIETLETGATVQVPLGGDAYVRATIEDMDEVVVTLGGGYAAERDSEGAVESLERKKETLDDRIEELEGEIETVEEETASLEEKAQQAQQQQMQQLQQMQQEDE.

A disordered region spans residues 120 to 151 (TVEEETASLEEKAQQAQQQQMQQLQQMQQEDE). Positions 133 to 151 (QQAQQQQMQQLQQMQQEDE) are enriched in low complexity.

The protein belongs to the prefoldin subunit alpha family. Heterohexamer of two alpha and four beta subunits.

The protein localises to the cytoplasm. Molecular chaperone capable of stabilizing a range of proteins. Seems to fulfill an ATP-independent, HSP70-like function in archaeal de novo protein folding. The polypeptide is Prefoldin subunit alpha (Natronomonas pharaonis (strain ATCC 35678 / DSM 2160 / CIP 103997 / JCM 8858 / NBRC 14720 / NCIMB 2260 / Gabara) (Halobacterium pharaonis)).